A 433-amino-acid polypeptide reads, in one-letter code: Enolase (433 aa).

A (2R)-2-phosphoglycerate-binding site is contributed by Gln-167. Residue Glu-209 is the Proton donor of the active site. Mg(2+)-binding residues include Asp-246, Glu-291, and Asp-318. Lys-343, Arg-372, Ser-373, and Lys-394 together coordinate (2R)-2-phosphoglycerate. Lys-343 (proton acceptor) is an active-site residue.

It belongs to the enolase family. As to quaternary structure, component of the RNA degradosome, a multiprotein complex involved in RNA processing and mRNA degradation. Mg(2+) is required as a cofactor.

Its subcellular location is the cytoplasm. It is found in the secreted. The protein localises to the cell surface. The catalysed reaction is (2R)-2-phosphoglycerate = phosphoenolpyruvate + H2O. The protein operates within carbohydrate degradation; glycolysis; pyruvate from D-glyceraldehyde 3-phosphate: step 4/5. Its function is as follows. Catalyzes the reversible conversion of 2-phosphoglycerate (2-PG) into phosphoenolpyruvate (PEP). It is essential for the degradation of carbohydrates via glycolysis. The protein is Enolase of Photobacterium profundum (strain SS9).